We begin with the raw amino-acid sequence, 635 residues long: MITITLPDGSRREFEGPVSVMQVAHAIGPGLAKATIAGQIDGGHLVDASDLIEHDAILRIITPEDQEALEIIRHSCAHLVGHAVKQLYPEAKMVIGPVIADGFYYDIYSKRPFTPEDLAAIEQRMVELIAQDYDVVKHITARHDVVRLFKERGEDYKLRLIEDMGPEVTAMGIYHHQEYVDMCRGPHVPNTRFLKAFRLTRISGAYWRGNTKNEQLQRIYGTAWADKKQLEAYMQRLQDAEKRDHRKIGKAQDLFHLQEEGPGLVFWHPKGWVIWQTIENYIRRVYRNSGYGELRCPQILDVSLWQKSGHWDNYKENMFFTDSEKRTYAVKPMNCPGHVQVFNQGLHSYRDLPIRYGEFGACHRNEPSGALHGLLRVRGFTQDDGHIFCTEAQIEAEVTAFHRQALQVYADFGFENIQIKIALRPDKRLGDSLSWDKAEAALRAALSACEVEWQELPGEGAFYGPKIEYHLKDAIGRTWQLGTIQVDFMMPARLGAEYVDERSQRRHPVMLHRAIVGSMERFIGILIEHYAGIWPTWLAPVQVVIANITDAQYEYAEQVHKALLNQGFRVNIDLRNEKIGYKIREHTLQRVPYLLVVGDREKENGTVAVRTCSREDLGAMSISTFVERLQTEQVV.

The region spanning 1-62 (MITITLPDGS…EHDAILRIIT (62 aa)) is the TGS domain. A catalytic region spans residues 244–535 (DHRKIGKAQD…LIEHYAGIWP (292 aa)). The Zn(2+) site is built by cysteine 335, histidine 386, and histidine 512.

It belongs to the class-II aminoacyl-tRNA synthetase family. In terms of assembly, homodimer. Zn(2+) is required as a cofactor.

The protein localises to the cytoplasm. The catalysed reaction is tRNA(Thr) + L-threonine + ATP = L-threonyl-tRNA(Thr) + AMP + diphosphate + H(+). In terms of biological role, catalyzes the attachment of threonine to tRNA(Thr) in a two-step reaction: L-threonine is first activated by ATP to form Thr-AMP and then transferred to the acceptor end of tRNA(Thr). Also edits incorrectly charged L-seryl-tRNA(Thr). In Xylella fastidiosa (strain M23), this protein is Threonine--tRNA ligase.